Reading from the N-terminus, the 260-residue chain is Tryptophan synthase alpha chain (260 aa).

Catalysis depends on proton acceptor residues E52 and D63.

Belongs to the TrpA family. As to quaternary structure, tetramer of two alpha and two beta chains.

It catalyses the reaction (1S,2R)-1-C-(indol-3-yl)glycerol 3-phosphate + L-serine = D-glyceraldehyde 3-phosphate + L-tryptophan + H2O. It participates in amino-acid biosynthesis; L-tryptophan biosynthesis; L-tryptophan from chorismate: step 5/5. The alpha subunit is responsible for the aldol cleavage of indoleglycerol phosphate to indole and glyceraldehyde 3-phosphate. In Streptococcus thermophilus (strain ATCC BAA-250 / LMG 18311), this protein is Tryptophan synthase alpha chain.